A 330-amino-acid polypeptide reads, in one-letter code: Syntaxin-121 (330 aa).

Positions 1–10 are enriched in polar residues; it reads MNNLFSSSWK. The disordered stretch occupies residues 1-39; it reads MNNLFSSSWKRTGGGGGGDGDIESGGGVEMAPPPGAAAG. Residues 1–284 are Cytoplasmic-facing; sequence MNNLFSSSWK…RKHQKSTRKW (284 aa). Gly residues predominate over residues 12 to 28; that stretch reads TGGGGGGDGDIESGGGV. Residues 212 to 274 form the t-SNARE coiled-coil homology domain; that stretch reads VAEIQERHGA…DRGREQLVVA (63 aa). A helical; Anchor for type IV membrane protein membrane pass occupies residues 285–305; it reads TCIAIIILLVLILVVVLPIVL. The Vesicular portion of the chain corresponds to 306–330; the sequence is KFVNNNKSSSSSPAPATPSPPPPTA. The tract at residues 311–330 is disordered; that stretch reads NKSSSSSPAPATPSPPPPTA. The segment covering 320-330 has biased composition (pro residues); sequence PATPSPPPPTA.

This sequence belongs to the syntaxin family. As to quaternary structure, interacts with SNAP32. Expressed in roots, stems, leaf blades and leaf sheaths.

Its subcellular location is the cell membrane. In terms of biological role, vesicle trafficking protein that functions in the secretory pathway. Involved in plant defense by mediating host resistance to the rice blast fungus Magnaporthe oryzae. The interaction with SNAP32 may contribute to host resistance to the rice blast fungus. The chain is Syntaxin-121 from Oryza sativa subsp. japonica (Rice).